Here is a 386-residue protein sequence, read N- to C-terminus: Aspergillopepsin-1 (386 aa).

The N-terminal stretch at 1-20 (MVVFSKVAAAAFGLSAVASA) is a signal peptide. Residues 21–69 (MPAAPPRQGFTINQLTRAIPKRTINLPAIYANALSKYGGNVPPHIQDAM) constitute a propeptide, activation peptide. The Peptidase A1 domain maps to 85-383 (YLTPVAVGGT…DSEGPQLGFA (299 aa)). D101 is an active-site residue. An N-linked (GlcNAc...) asparagine glycan is attached at N130. D275 is a catalytic residue. An intrachain disulfide couples C311 to C346.

It belongs to the peptidase A1 family. In terms of assembly, monomer.

Its subcellular location is the secreted. It carries out the reaction Hydrolysis of proteins with broad specificity. Generally favors hydrophobic residues in P1 and P1', but also accepts Lys in P1, which leads to activation of trypsinogen. Does not clot milk.. Functionally, secreted aspartic endopeptidase that allows assimilation of proteinaceous substrates. The scissile peptide bond is attacked by a nucleophilic water molecule activated by two aspartic residues in the active site. Shows a broad primary substrate specificity. Favors hydrophobic residues at the P1 and P1' positions, but also accepts a lysine residue in the P1 position, leading to the activation of trypsinogen and chymotrypsinogen A. This chain is Aspergillopepsin-1, found in Emericella nidulans (strain FGSC A4 / ATCC 38163 / CBS 112.46 / NRRL 194 / M139) (Aspergillus nidulans).